The chain runs to 263 residues: Translation initiation factor 2 subunit alpha (263 aa).

One can recognise an S1 motif domain in the interval 12-83; the sequence is GEILIATVKQ…RKGTIDVSLK (72 aa).

The protein belongs to the eIF-2-alpha family. In terms of assembly, heterotrimer composed of an alpha, a beta and a gamma chain.

In terms of biological role, eIF-2 functions in the early steps of protein synthesis by forming a ternary complex with GTP and initiator tRNA. The protein is Translation initiation factor 2 subunit alpha of Sulfurisphaera tokodaii (strain DSM 16993 / JCM 10545 / NBRC 100140 / 7) (Sulfolobus tokodaii).